The following is a 254-amino-acid chain: Triosephosphate isomerase (254 aa).

N9–K11 contacts substrate. Catalysis depends on H95, which acts as the Electrophile. E167 functions as the Proton acceptor in the catalytic mechanism. Substrate-binding positions include G173, S213, and G234 to G235.

It belongs to the triosephosphate isomerase family. As to quaternary structure, homodimer.

It localises to the cytoplasm. It carries out the reaction D-glyceraldehyde 3-phosphate = dihydroxyacetone phosphate. It participates in carbohydrate biosynthesis; gluconeogenesis. The protein operates within carbohydrate degradation; glycolysis; D-glyceraldehyde 3-phosphate from glycerone phosphate: step 1/1. Functionally, involved in the gluconeogenesis. Catalyzes stereospecifically the conversion of dihydroxyacetone phosphate (DHAP) to D-glyceraldehyde-3-phosphate (G3P). The polypeptide is Triosephosphate isomerase (Roseiflexus castenholzii (strain DSM 13941 / HLO8)).